Reading from the N-terminus, the 454-residue chain is Probable spastin homolog Bm1_53365 (454 aa).

Residue 218–225 participates in ATP binding; the sequence is GPPGNGKT.

It belongs to the AAA ATPase family. Spastin subfamily. In terms of assembly, homohexamer. The homohexamer is stabilized by ATP-binding. The homohexamer may adopt a ring conformation through which microtubules pass prior to being severed. Interacts with microtubules.

It is found in the cytoplasm. The protein localises to the cytoskeleton. It localises to the perinuclear region. It catalyses the reaction n ATP + n H2O + a microtubule = n ADP + n phosphate + (n+1) alpha/beta tubulin heterodimers.. Severs microtubules, probably in an ATP-dependent fashion. The chain is Probable spastin homolog Bm1_53365 from Brugia malayi (Filarial nematode worm).